Reading from the N-terminus, the 522-residue chain is Maturase K (522 aa).

The protein belongs to the intron maturase 2 family. MatK subfamily.

The protein localises to the plastid. The protein resides in the chloroplast. Usually encoded in the trnK tRNA gene intron. Probably assists in splicing its own and other chloroplast group II introns. This Sapindus saponaria (Soapberry) protein is Maturase K.